Reading from the N-terminus, the 205-residue chain is Ypt/Rab-type GTPase Rab7 (205 aa).

Residues 17–23 (SGVGKTS), 33–40 (FSASYKAT), Gly66, 125–128 (NKID), and 157–159 (SAK) each bind GTP. The short motif at 37 to 45 (YKATIGADF) is the Effector region element. Residues Cys203 and Cys205 are each lipidated (S-geranylgeranyl cysteine). Residue Cys205 is modified to Cysteine methyl ester.

It belongs to the small GTPase superfamily. Rab family.

The protein localises to the cell membrane. With respect to regulation, alternates between an inactive form bound to GDP and an active form bound to GTP. Activated by guanine nucleotide-exchange factors (GEFs), and inactivated by GTPase-activating proteins (GAPs). Ypt/Rab-type GTPases are key regulators of membrane trafficking and intracellular vesicular transport. They act as molecular switches that convert between GTP-bound and GDP-bound states, and regulate virtually all steps of membrane traffic from the formation of the transport vesicle at the donor membrane to its fusion at the target membrane. In the GDP-bound state, Ypt proteins are predominantly cytosolic, solubilized through the interaction with a GDP dissociation inhibitor (GDI). In the GTP-bound state, the proteins are membrane bound and interact with specific effector proteins that select cargo, promote vesicle movement, or verify the correct site of fusion. This Neurospora crassa (strain ATCC 24698 / 74-OR23-1A / CBS 708.71 / DSM 1257 / FGSC 987) protein is Ypt/Rab-type GTPase Rab7 (gtp-14).